An 867-amino-acid polypeptide reads, in one-letter code: Prominin-1 (867 aa).

An N-terminal signal peptide occupies residues 1–19; sequence MALVFSALLLLGLCGKISS. The Extracellular segment spans residues 20–107; that stretch reads EGQPAFHNTP…VLALKIALYE (88 aa). A helical membrane pass occupies residues 108–128; that stretch reads IGVLICAILGLLFIILMPLVG. Residues 129 to 158 are Cytoplasmic-facing; it reads CFFCMCRCCNKCGGEMHQRQKQNAPCRRKC. The helical transmembrane segment at 159 to 179 threads the bilayer; it reads LGLSLLVICLLMSLGIIYGFV. Residues 180–434 are Extracellular-facing; that stretch reads ANQQTRTRIK…LPKLEEYDSY (255 aa). 3 positions are modified to N6-acetyllysine: lysine 226, lysine 258, and lysine 265. N-linked (GlcNAc...) asparagine glycosylation is found at asparagine 273, asparagine 291, asparagine 332, asparagine 374, and asparagine 415. A helical membrane pass occupies residues 435 to 455; it reads WWLGGLIVCFLLTLIVTFFFL. The Cytoplasmic portion of the chain corresponds to 456–487; that stretch reads GLLCGVFGYDKHATPTRRGCVSNTGGIFLMAG. A helical transmembrane segment spans residues 488–508; it reads VGFGFLFCWILMILVVLTFVV. The Extracellular segment spans residues 509–794; the sequence is GANVEKLLCE…LCGYVADPLN (286 aa). Asparagine 554, asparagine 581, and asparagine 732 each carry an N-linked (GlcNAc...) asparagine glycan. The helical transmembrane segment at 795–815 threads the bilayer; it reads LFWFGIGKATVLLLPAVIIAI. Over 816 to 867 the chain is Cytoplasmic; sequence KLAKYYRRMDSEDVYDDVETVPMKNLEIGSNGYHKDHLYGVHNPVMTSPSRY. Serine 865 carries the post-translational modification Phosphoserine.

Belongs to the prominin family. In terms of assembly, interacts with CDHR1 and with actin filaments. Interacts with NAT8 and NAT8B. Acetylation at Lys-226, Lys-258 and Lys-265 by NAT8 and NAT8B may control PROM1 protein expression and its function in cell apoptosis. As to expression, in the submandibular gland, expressed on the apical side of epithelial cells. In the parotid gland, expressed in the intercalated ducts. In the sublingual gland, expressed in intercalated ducts. In the extraorbital lacrimal gland, expressed in the intercalated tubules and larger intralobular ducts. Expressed in the retina. Present in urine within small membrane particles (at protein level). In the embryo, expressed on the apical side of neuroepithelial cells and of other epithelia such as lung buds, gut and ureter buds. In the adult, expressed at the apical side of the kidney tubules and of the ependymal layer of the brain. Not expressed in gut, liver, lung, pituitary, adrenal, heart or spleen. Localized to the nascent disk membranes at the base of the rod outer segment in the retina (at protein level).

The protein resides in the apical cell membrane. It is found in the cell projection. Its subcellular location is the microvillus membrane. The protein localises to the cilium. It localises to the photoreceptor outer segment. The protein resides in the endoplasmic reticulum. It is found in the endoplasmic reticulum-Golgi intermediate compartment. May play a role in cell differentiation, proliferation and apoptosis. Binds cholesterol in cholesterol-containing plasma membrane microdomains and may play a role in the organization of the apical plasma membrane in epithelial cells. During early retinal development acts as a key regulator of disk morphogenesis. Involved in regulation of MAPK and Akt signaling pathways. In neuroblastoma cells suppresses cell differentiation such as neurite outgrowth in a RET-dependent manner. The sequence is that of Prominin-1 (Prom1) from Mus musculus (Mouse).